A 421-amino-acid chain; its full sequence is Serine hydroxymethyltransferase (421 aa).

(6S)-5,6,7,8-tetrahydrofolate is bound by residues Leu-118 and 122–124; that span reads GHL. Lys-226 bears the N6-(pyridoxal phosphate)lysine mark. Glu-242 contacts (6S)-5,6,7,8-tetrahydrofolate.

This sequence belongs to the SHMT family. In terms of assembly, homodimer. The cofactor is pyridoxal 5'-phosphate.

The protein resides in the cytoplasm. It carries out the reaction (6R)-5,10-methylene-5,6,7,8-tetrahydrofolate + glycine + H2O = (6S)-5,6,7,8-tetrahydrofolate + L-serine. Its pathway is one-carbon metabolism; tetrahydrofolate interconversion. It participates in amino-acid biosynthesis; glycine biosynthesis; glycine from L-serine: step 1/1. In terms of biological role, catalyzes the reversible interconversion of serine and glycine with tetrahydrofolate (THF) serving as the one-carbon carrier. This reaction serves as the major source of one-carbon groups required for the biosynthesis of purines, thymidylate, methionine, and other important biomolecules. Also exhibits THF-independent aldolase activity toward beta-hydroxyamino acids, producing glycine and aldehydes, via a retro-aldol mechanism. This is Serine hydroxymethyltransferase from Mycoplasmopsis synoviae (strain 53) (Mycoplasma synoviae).